Consider the following 496-residue polypeptide: Ribose import ATP-binding protein RbsA (496 aa).

2 consecutive ABC transporter domains span residues 3–239 (IVME…VGRE) and 246–493 (ERTP…TGGN). 35-42 (GENGAGKS) is an ATP binding site.

It belongs to the ABC transporter superfamily. Ribose importer (TC 3.A.1.2.1) family. As to quaternary structure, the complex is composed of an ATP-binding protein (RbsA), two transmembrane proteins (RbsC) and a solute-binding protein (RbsB).

It is found in the cell membrane. The catalysed reaction is D-ribose(out) + ATP + H2O = D-ribose(in) + ADP + phosphate + H(+). Part of the ABC transporter complex RbsABC involved in ribose import. Responsible for energy coupling to the transport system. This Oceanobacillus iheyensis (strain DSM 14371 / CIP 107618 / JCM 11309 / KCTC 3954 / HTE831) protein is Ribose import ATP-binding protein RbsA.